The primary structure comprises 306 residues: NAD kinase 1 (306 aa).

Aspartate 67 (proton acceptor) is an active-site residue. Residues 67–68 (DG), 149–150 (ND), and aspartate 181 contribute to the NAD(+) site.

It belongs to the NAD kinase family. A divalent metal cation is required as a cofactor.

It is found in the cytoplasm. It catalyses the reaction NAD(+) + ATP = ADP + NADP(+) + H(+). In terms of biological role, involved in the regulation of the intracellular balance of NAD and NADP, and is a key enzyme in the biosynthesis of NADP. Catalyzes specifically the phosphorylation on 2'-hydroxyl of the adenosine moiety of NAD to yield NADP. In Synechococcus sp. (strain ATCC 27144 / PCC 6301 / SAUG 1402/1) (Anacystis nidulans), this protein is NAD kinase 1.